A 370-amino-acid chain; its full sequence is L-selectin (370 aa).

An N-terminal signal peptide occupies residues Met-1–Cys-28. Positions Asp-29–Cys-38 are excised as a propeptide. Topologically, residues Trp-39–Pro-333 are extracellular. The C-type lectin domain maps to Ala-55–Cys-155. Cystine bridges form between Cys-57-Cys-155, Cys-128-Cys-147, Cys-128-Cys-160, Cys-160-Cys-171, Cys-165-Cys-180, Cys-182-Cys-191, Cys-197-Cys-241, Cys-227-Cys-254, Cys-259-Cys-303, and Cys-289-Cys-316. N-linked (GlcNAc...) asparagine glycans are attached at residues Asn-60, Asn-77, and Asn-104. Positions 118, 120, 126, 143, and 144 each coordinate Ca(2+). Residues Tyr-156–Gln-192 form the EGF-like domain. Asn-177 is a glycosylation site (N-linked (GlcNAc...) asparagine). 2 consecutive Sushi domains span residues Thr-195–Val-256 and Ile-257–Lys-318. N-linked (GlcNAc...) asparagine glycosylation is found at Asn-216, Asn-226, and Asn-246. 2 N-linked (GlcNAc...) asparagine glycosylation sites follow: Asn-308 and Asn-320. A helical membrane pass occupies residues Leu-334–Leu-354. The Cytoplasmic portion of the chain corresponds to Ala-355 to Gly-370.

Belongs to the selectin/LECAM family. In terms of assembly, interaction with SELPLG/PSGL1 and PODXL2 is required for promoting recruitment and rolling of leukocytes. This interaction is dependent on the sialyl Lewis X glycan modification of SELPLG and PODXL2, and tyrosine sulfation modifications of SELPLG. Sulfation on 'Tyr-51' of SELPLG is important for L-selectin binding. In terms of processing, N-glycosylated. As to expression, highly expressed in lymphocytes from peripheral lymph nodes. Low in lymphocytes isolated from Peyer patches.

Its subcellular location is the cell membrane. In terms of biological role, calcium-dependent lectin that mediates cell adhesion by binding to glycoproteins on neighboring cells. Mediates the adherence of lymphocytes to endothelial cells of high endothelial venules in peripheral lymph nodes. Promotes initial tethering and rolling of leukocytes in endothelia. This chain is L-selectin (SELL), found in Bos taurus (Bovine).